We begin with the raw amino-acid sequence, 301 residues long: Rhodopsin (301 aa).

At 1–18 (LHMIHLHWYQYPPMNPMM) the chain is on the extracellular side. A helical membrane pass occupies residues 19-43 (YPLLLIFMFITGIPCLAGNFVTIWV). Residues 44–55 (FMTTKSLRSPAN) are Cytoplasmic-facing. A helical transmembrane segment spans residues 56–78 (LLVVNLAMSDFLMMFTMFPPMMI). Residues 79–92 (TCYYHTWTLGPTFC) are Extracellular-facing. Cysteine 92 and cysteine 169 are disulfide-bonded. A helical membrane pass occupies residues 93–115 (QVYAFLGNLFGCTSIWTMVFITF). The 'Ionic lock' involved in activated form stabilization motif lies at 116-118 (DRY). Residues 116-134 (DRYNVIVKGVAGEPLSNKK) are Cytoplasmic-facing. The helical transmembrane segment at 135–155 (AALWILSAWVLSFSWCSAPFF) threads the bilayer. At 156-182 (GWNRYVPEGNLTGCGTDYLSEDALSRS) the chain is on the extracellular side. Asparagine 165 is a glycosylation site (N-linked (GlcNAc...) asparagine). A helical transmembrane segment spans residues 183–204 (YLYVYSVWVYFLPLLITIYCYV). The Cytoplasmic segment spans residues 205–245 (FIIKAVAAHEKGMRDQAKKMGIKSLRNEEAQKTSAECRLAK). The helical transmembrane segment at 246 to 267 (IAMTTVALWFIAWTPYLLINWV) threads the bilayer. The Extracellular segment spans residues 268–278 (GMFARSYLSPV). Residues 279 to 300 (YTIWGYVFAKANAVYNPIVYAI) traverse the membrane as a helical segment. The residue at position 288 (lysine 288) is an N6-(retinylidene)lysine.

This sequence belongs to the G-protein coupled receptor 1 family. Opsin subfamily. Homodimer. Interacts with GNAQ. Post-translationally, contains one covalently linked retinal chromophore.

The protein localises to the cell projection. The protein resides in the rhabdomere membrane. In terms of biological role, photoreceptor required for image-forming vision at low light intensity. Can use both retinal and 3-dehydroretinal as visual pigment. Light-induced isomerization of 11-cis to all-trans retinal triggers a conformational change that activates signaling via G-proteins. Signaling via GNAQ probably mediates the activation of phospholipase C. The protein is Rhodopsin (RHO) of Cambarellus shufeldtii (Cajun dwarf crayfish).